The primary structure comprises 366 residues: Dehydrogenase aclE (366 aa).

Positions methionine 1–cysteine 19 are cleaved as a signal peptide. Residue asparagine 330 is glycosylated (N-linked (GlcNAc...) asparagine).

The protein belongs to the Gfo/Idh/MocA family.

It functions in the pathway mycotoxin biosynthesis. Its function is as follows. Dehydrogenase; part of the gene cluster that mediates the biosynthesis of aspirochlorine (or antibiotic A30641), an unusual halogenated spiro compound with distinctive antifungal properties due to selective inhibition of protein biosynthesis, and which is also active against bacteria, viruses, and murine tumor cells. The non-ribosomal peptide synthetase (NRPS) aclP is responsible the formation of the diketopiperazine (DKP) core from the condensation of 2 phenylalanine residues. One Phe residue is tailored into chlorotyrosine by hydroxylation and chlorination, whereas the second Phe undergoes an unprecedented C-C bond cleavage to be converted into glycine. After formation of the DKP, sulfur is incorporated into the DKP by conjugation with glutathione by aclG, followed by its stepwise degradation to the thiol by aclI, aclJ and aclK, and the dithiol oxidation by aclT. In addition, oxygenases (aclB, aclC, aclL and aclO) and O-methyltransferases (aclM and aclU) act as tailoring enzymes to produce the intermediate dechloroaspirochlorine. Ultimately, chlorination of dechloroaspirochlorine by the halogenase aclH is the last step in the aspirochlorine pathway. The polypeptide is Dehydrogenase aclE (Aspergillus oryzae (strain ATCC 42149 / RIB 40) (Yellow koji mold)).